A 101-amino-acid polypeptide reads, in one-letter code: Thylakoid-associated protein slr0729 (101 aa).

Its subcellular location is the cellular thylakoid membrane. The protein is Thylakoid-associated protein slr0729 of Synechocystis sp. (strain ATCC 27184 / PCC 6803 / Kazusa).